The primary structure comprises 197 residues: Recombination protein RecR (197 aa).

The C4-type zinc-finger motif lies at 56–71 (CERCNTFTETEICQRC). Positions 79 to 174 (SLLCVVEMPA…RVSRLSRGVP (96 aa)) constitute a Toprim domain.

This sequence belongs to the RecR family.

In terms of biological role, may play a role in DNA repair. It seems to be involved in an RecBC-independent recombinational process of DNA repair. It may act with RecF and RecO. The sequence is that of Recombination protein RecR from Aromatoleum aromaticum (strain DSM 19018 / LMG 30748 / EbN1) (Azoarcus sp. (strain EbN1)).